Consider the following 299-residue polypeptide: MLDNTRLRIAMQKSGRLSDESRELLARCGIKINLQQQRLIAFAENMPIDILRVRDDDIPGLVMDGVVDLGIIGENVLEEELLTRRAQGEDPRYKTLRRLDFGGCRLSLAMSVDDEYSGPQCLQNSRIATSYPHLLKKYLDEQRVSFKSCLLNGSVEVAPRAGLADAICDLVSTGATLEANGLREVEVIYRSKACLIQRDGEMPANKQLLIDKLMTRIQGVIQARESKYIMLHAPSERLEEIITLLPGAERPTVLPLAGDKSRVAMHMVSSETLFWETMEKLKALGASSILVLPIEKMME.

It belongs to the ATP phosphoribosyltransferase family. Long subfamily. As to quaternary structure, equilibrium between an active dimeric form, an inactive hexameric form and higher aggregates. Interconversion between the various forms is largely reversible and is influenced by the natural substrates and inhibitors of the enzyme. Mg(2+) is required as a cofactor.

It localises to the cytoplasm. It carries out the reaction 1-(5-phospho-beta-D-ribosyl)-ATP + diphosphate = 5-phospho-alpha-D-ribose 1-diphosphate + ATP. It functions in the pathway amino-acid biosynthesis; L-histidine biosynthesis; L-histidine from 5-phospho-alpha-D-ribose 1-diphosphate: step 1/9. Feedback inhibited by histidine. In terms of biological role, catalyzes the condensation of ATP and 5-phosphoribose 1-diphosphate to form N'-(5'-phosphoribosyl)-ATP (PR-ATP). Has a crucial role in the pathway because the rate of histidine biosynthesis seems to be controlled primarily by regulation of HisG enzymatic activity. This Erwinia tasmaniensis (strain DSM 17950 / CFBP 7177 / CIP 109463 / NCPPB 4357 / Et1/99) protein is ATP phosphoribosyltransferase.